A 1778-amino-acid polypeptide reads, in one-letter code: MKKKFSIVIISVLLLGYLAPFDTLLVGADETTVSEDTAVKTAEADSATEGIESETGSDDETAEEPKEAKEAEASKETTEKEEKAKTEEPASNIKTEINTDKSQLKQTSLKAAVPAGSTYNSLFPDDNLAKKLAVIITGNAAATGNESVDSAALLAISQLDLSGETGNDPTDISNIEGLQYLENLTSLNLSENNISDLAPLKDLVNLVSLNLSSNRTLVNLSGVEDLVNLQELNVSANKALEDISQVASLPVLKEISAQGCNIKTLELKNPAGAVLPELETFYLQENDLTNLTSLAKLPKLKNLYIKGNASLKSLETLNGATKLQLIDASNCTDLETLGDISGLSELEMIQLSGCSKLKEITSLKNLPNLVNITADSCAIEDLGTLNNLPKLQTLVLSDNENLTNITAITDLPQLKTLTLDGCGITSIGTLDNLPKLEKLDLKENQITSISEITDLPRLSYLDVSVNNLTTIGDLKKLPLLEWLNVSSNRLSDVSTLTNFPSLNYINISNNVIRTVGKMTELPSLKEFYAQNNSISDISMIHDMPNLRKVDASNNLITNIGTFDNLPKLQSLDVHSNRITSTSVIHDLPSLETFNAQTNLITNIGTMDNLPDLTYVNLSFNRIPSLAPIGDLPNLETLIVSDNNSYLRSLGTMDGVPKLRILDLQNNYLNYTGTEGNLSSLSDLTNLTELNLRNNVYIDDISGLSTLSRLIYLNLDSNKIEDISALSNLTNLQELTLENNKIENISALSDLENLNKLVVSKNKIIDISPVANMVNRGAIVTASNQTYTLPTVLSYQSSFTIDNPVIWYDGTLLAPSSIGNSGNYKDGKITWTNMTATSSSTLFNFNRLKDGLTFSGTVTQPYKSAAKVTADAEQTYTIGDTISEEQFLKDVNAKSSDGAPVTSDFATVVDLNTFGEYEVTLTSEKDGIQGDSCKVIVKVLHGAPVISADQTISYDKHATITEKQFLEDIHASTDLDTAITTNFSTAVNLNKGGDYTVALNSENEDGVKAETVYVTVTVNKDPAPIISAKTEITYDKFSKKTEAAFLDDIDADTNDGSIVTSNFATAVNLDKAGDYTVTLNSINSDGVAGTPTAIIVHVEKEKIATISTNTAQQYEKYAKINETQFLKDVHASINASPTTAVLESDFETVVKLDVPGTYTVTITATNEDGGVSAPKEVSVIVRKIPAPEITADKEITYPKFDEVSEAEFLNDIHATISDKNVAITSNFSTDVNLNKAGDYTVTLNATNEDGVKATPVEVIVHVQQGERPVITADATISYDKFANITEAKFLEDIHATSSDGQSSTVITSNFQTATNFKTAMSYTVTLNAVNEDGISAEPVAVTVTINKEPAAALKADAEVSYAKNEAVTESDFFKDVHLEGTEAPSTAKATSNFDSVVDRSKTGDYTVTINATNEDGAVSTPIEVIVHIEAESAPVITANAEVKYNKHEQTDERRFLYDSEAKIDEANVEIKTDFAEKVDINKVGTYTVTLTATNEDGQAANPVEVSVIVSDAAAEKVNVKYVDENGSEISAAETLTGNLDETFSIDAKSIAGYKCDATLSGVFSTVEQTVVFHYKAIKPGVVTIKYEDTNGKAVDEDKQITGEVGDDFEAEAQTVSGYSCRAIASGKITEEPQTITFTYSTATPSKKSGEITVQYVDESGKKLADSKKVTGNIDDSYSVEAKAIEGYSVVGDDSAKGVFTEKSQTVTFKYKKNTQVSKDDPKVKGKTNQPSSTDTKLKVDNNSLPATGDTENMILAVLIGFNMLIVASIFLFRKPKTNQ.

Residues 1-28 (MKKKFSIVIISVLLLGYLAPFDTLLVGA) form the signal peptide. The disordered stretch occupies residues 36–101 (DTAVKTAEAD…NIKTEINTDK (66 aa)). Positions 51-62 (IESETGSDDETA) are enriched in acidic residues. The span at 63-88 (EEPKEAKEAEASKETTEKEEKAKTEE) shows a compositional bias: basic and acidic residues. LRR repeat units follow at residues 155–179 (AISQ…EGLQ), 183–204 (NLTS…KDLV), 205–227 (NLVS…EDLV), 228–250 (NLQE…ASLP), 251–272 (VLKE…NPAG), 277–298 (ELET…AKLP), 299–321 (KLKN…NGAT), 322–344 (KLQL…SGLS), 345–367 (ELEM…KNLP), 368–389 (NLVN…NNLP), 390–412 (KLQT…TDLP), 413–434 (QLKT…DNLP), 435–456 (KLEK…TDLP), 457–478 (RLSY…KKLP), 479–500 (LLEW…TNFP), 501–522 (SLNY…TELP), 523–544 (SLKE…HDMP), 545–566 (NLRK…DNLP), 567–588 (KLQS…HDLP), 589–610 (SLET…DNLP), 611–632 (DLTY…GDLP), 633–653 (NLET…GTMD), 657–678 (KLRI…GNLS), 685–707 (NLTE…STLS), 708–729 (RLIY…SNLT), 730–751 (NLQE…SDLE), and 752–773 (NLNK…ANMV). In terms of domain architecture, LRRCT spans 785–872 (TYTLPTVLSY…SAAKVTADAE (88 aa)). MucBP domains follow at residues 1510 to 1569 (DAAA…EQTV), 1575 to 1634 (AIKP…PQTI), and 1644 to 1705 (SKKS…SQTV). Residues 1716–1742 (SKDDPKVKGKTNQPSSTDTKLKVDNNS) form a disordered region. A compositionally biased stretch (polar residues) spans 1725–1742 (KTNQPSSTDTKLKVDNNS). An LPXTG sorting signal motif is present at residues 1743–1747 (LPATG). A Pentaglycyl murein peptidoglycan amidated threonine modification is found at threonine 1746. Positions 1747–1778 (GDTENMILAVLIGFNMLIVASIFLFRKPKTNQ) are cleaved as a propeptide — removed by sortase.

It belongs to the internalin family.

It localises to the secreted. The protein resides in the cell wall. Its function is as follows. A role in virulence could not be demonstrated. The polypeptide is Internalin I (inlI) (Listeria monocytogenes serovar 1/2a (strain ATCC BAA-679 / EGD-e)).